A 137-amino-acid polypeptide reads, in one-letter code: Nucleoside diphosphate kinase (137 aa).

Positions 9, 57, 85, 91, 102, and 112 each coordinate ATP. Histidine 115 functions as the Pros-phosphohistidine intermediate in the catalytic mechanism.

The protein belongs to the NDK family. As to quaternary structure, homotetramer. Mg(2+) is required as a cofactor.

The protein localises to the cytoplasm. It carries out the reaction a 2'-deoxyribonucleoside 5'-diphosphate + ATP = a 2'-deoxyribonucleoside 5'-triphosphate + ADP. The catalysed reaction is a ribonucleoside 5'-diphosphate + ATP = a ribonucleoside 5'-triphosphate + ADP. In terms of biological role, major role in the synthesis of nucleoside triphosphates other than ATP. The ATP gamma phosphate is transferred to the NDP beta phosphate via a ping-pong mechanism, using a phosphorylated active-site intermediate. This is Nucleoside diphosphate kinase from Citrifermentans bemidjiense (strain ATCC BAA-1014 / DSM 16622 / JCM 12645 / Bem) (Geobacter bemidjiensis).